The sequence spans 1438 residues: Lysophospholipase NTE1 (1438 aa).

At 1 to 25 (MDSDTSSADFHSTETLVSTPKYSYG) the chain is on the cytoplasmic side. The chain crosses the membrane as a helical span at residues 26-46 (VLINVILLVSWTCFRVVNWFL). Over 47 to 64 (VTLPSILLGMLSKTFQIT) the chain is Lumenal. A helical transmembrane segment spans residues 65 to 85 (LSLSSILMFVVAVTAICFLVV). Topologically, residues 86 to 1438 (RYKYLTRYSR…HVSLSRRNSI (1353 aa)) are cytoplasmic. Polar residues predominate over residues 432-450 (YETQTIPNESEDSPTIQRS). The segment at 432–464 (YETQTIPNESEDSPTIQRSSLRRRASHSTSLRK) is disordered. A nucleoside 3',5'-cyclic phosphate-binding positions include 590–720 (GDDS…LTID) and 707–856 (RLKR…VANR). The 165-residue stretch at 1131–1295 (LVLGGGGSRG…LDNLPVSEMK (165 aa)) folds into the PNPLA domain. Positions 1135–1140 (GGGSRG) match the GXGXXG motif. Residues 1162–1166 (GTSIG) carry the GXSXG motif. S1164 serves as the catalytic Nucleophile. Residue D1282 is the Proton acceptor of the active site. A DGA/G motif is present at residues 1282–1284 (DGG).

Belongs to the NTE family.

The protein resides in the endoplasmic reticulum membrane. It carries out the reaction a 1-acyl-sn-glycero-3-phosphocholine + H2O = sn-glycerol 3-phosphocholine + a fatty acid + H(+). Inhibited by organophosphorus esters. Its function is as follows. Intracellular phospholipase B that catalyzes the double deacylation of phosphatidylcholine (PC) to glycerophosphocholine (GroPCho). Plays an important role in membrane lipid homeostasis. Responsible for the rapid PC turnover in response to inositol, elevated temperatures, or when choline is present in the growth medium. The chain is Lysophospholipase NTE1 (NTE1) from Meyerozyma guilliermondii (strain ATCC 6260 / CBS 566 / DSM 6381 / JCM 1539 / NBRC 10279 / NRRL Y-324) (Yeast).